The primary structure comprises 597 residues: MQHIRNFSIIAHIDHGKSTLADRIIHLCGGLSDREMEEQVLDSMELERERGITIKAQTAALEYKSRDGSSYLLNLIDTPGHVDFSYEVSRSLAACEGALLVVDASQGVEAQTVANCYTAIEQGVEVIPVLNKIDLPAAEPERVIKEIEDIIGIEAQDAVRASAKTGVGVEDILEAVISRIPPPKGNPEAPLKALIIDSWFDNYVGVVMLVRVMDGVLKPKDRILLMASKTTHLCEQVGVFTPKSRNRESLSAGEVGFIISGIKELKSAKVGDTVTLVDRPAPQPLLGFKEIKPQVFAGLYPVESNQYDALRDALEKLKLNDSSLQYEPETSQALGFGFRCGFLGLLHLDIVQERLEREYDMNLITTAPTVVYQVVLRDGSVIEIENPSRLPDLSKIEQIREPIITATILVPQEYVGSVITLCISKRGIQKNMQYMGRQVMLTYEIPLNEVVMDFFDRLKSTSRGYASLDYEFKEFRASDLVKLDILINGERVDALSLIVHRASSQYRGRELAQKMRELIPRQMFDIAVQAAIGSHIIARESIKALRKNVLAKCYGGDITRKRKLLEKQKAGKKRMKQVGNVEIPQEAFLAILQVGEK.

Positions Gln2–Lys184 constitute a tr-type G domain. GTP contacts are provided by residues Asp14–Thr19 and Asn131–Asp134.

This sequence belongs to the TRAFAC class translation factor GTPase superfamily. Classic translation factor GTPase family. LepA subfamily.

The protein resides in the cell inner membrane. It catalyses the reaction GTP + H2O = GDP + phosphate + H(+). Its function is as follows. Required for accurate and efficient protein synthesis under certain stress conditions. May act as a fidelity factor of the translation reaction, by catalyzing a one-codon backward translocation of tRNAs on improperly translocated ribosomes. Back-translocation proceeds from a post-translocation (POST) complex to a pre-translocation (PRE) complex, thus giving elongation factor G a second chance to translocate the tRNAs correctly. Binds to ribosomes in a GTP-dependent manner. This is Elongation factor 4 from Nitrosospira multiformis (strain ATCC 25196 / NCIMB 11849 / C 71).